A 273-amino-acid chain; its full sequence is Dermonecrotic toxin LsaSicTox-alphaIB1aii (273 aa).

His-5 is an active-site residue. Mg(2+) is bound by residues Glu-25 and Asp-27. The active-site Nucleophile is the His-41. 2 disulfides stabilise this stretch: Cys-45–Cys-51 and Cys-47–Cys-190. Residue Asp-85 coordinates Mg(2+).

Belongs to the arthropod phospholipase D family. Class II subfamily. Requires Mg(2+) as cofactor. Expressed by the venom gland.

The protein resides in the secreted. It catalyses the reaction an N-(acyl)-sphingosylphosphocholine = an N-(acyl)-sphingosyl-1,3-cyclic phosphate + choline. The catalysed reaction is an N-(acyl)-sphingosylphosphoethanolamine = an N-(acyl)-sphingosyl-1,3-cyclic phosphate + ethanolamine. It carries out the reaction a 1-acyl-sn-glycero-3-phosphocholine = a 1-acyl-sn-glycero-2,3-cyclic phosphate + choline. The enzyme catalyses a 1-acyl-sn-glycero-3-phosphoethanolamine = a 1-acyl-sn-glycero-2,3-cyclic phosphate + ethanolamine. Dermonecrotic toxins cleave the phosphodiester linkage between the phosphate and headgroup of certain phospholipids (sphingolipid and lysolipid substrates), forming an alcohol (often choline) and a cyclic phosphate. This toxin acts on sphingomyelin (SM). It may also act on ceramide phosphoethanolamine (CPE), lysophosphatidylcholine (LPC) and lysophosphatidylethanolamine (LPE), but not on lysophosphatidylserine (LPS), and lysophosphatidylglycerol (LPG). It acts by transphosphatidylation, releasing exclusively cyclic phosphate products as second products. Induces dermonecrosis, hemolysis, increased vascular permeability, edema, inflammatory response, and platelet aggregation. The polypeptide is Dermonecrotic toxin LsaSicTox-alphaIB1aii (Loxosceles sabina (Tucson recluse spider)).